Consider the following 403-residue polypeptide: S-adenosylmethionine:tRNA ribosyltransferase-isomerase (403 aa).

It belongs to the QueA family. As to quaternary structure, monomer.

The protein localises to the cytoplasm. It carries out the reaction 7-aminomethyl-7-carbaguanosine(34) in tRNA + S-adenosyl-L-methionine = epoxyqueuosine(34) in tRNA + adenine + L-methionine + 2 H(+). Its pathway is tRNA modification; tRNA-queuosine biosynthesis. Its function is as follows. Transfers and isomerizes the ribose moiety from AdoMet to the 7-aminomethyl group of 7-deazaguanine (preQ1-tRNA) to give epoxyqueuosine (oQ-tRNA). In Psychrobacter arcticus (strain DSM 17307 / VKM B-2377 / 273-4), this protein is S-adenosylmethionine:tRNA ribosyltransferase-isomerase.